Reading from the N-terminus, the 117-residue chain is NADH-ubiquinone oxidoreductase chain 3 (117 aa).

3 helical membrane-spanning segments follow: residues 4-24, 61-81, and 86-106; these read FLGILIYFFIALALSLLLLGL, LVAILFIIFDLEVAFLFPWAL, and IGYFGFWSMMLFLFILTVGFI.

The protein belongs to the complex I subunit 3 family.

It localises to the mitochondrion membrane. It catalyses the reaction a ubiquinone + NADH + 5 H(+)(in) = a ubiquinol + NAD(+) + 4 H(+)(out). Core subunit of the mitochondrial membrane respiratory chain NADH dehydrogenase (Complex I) that is believed to belong to the minimal assembly required for catalysis. Complex I functions in the transfer of electrons from NADH to the respiratory chain. The immediate electron acceptor for the enzyme is believed to be ubiquinone. This chain is NADH-ubiquinone oxidoreductase chain 3 (NAD3), found in Prototheca wickerhamii.